Reading from the N-terminus, the 779-residue chain is MAEDNSWKTPSFRQSVVNKINEAIQQSGMTSSKNGLEMENHVFQKARNKDEYLGYVARLILHVREMNTKNKNQQNPAGGSQDGGNPNQQGGMPDPINALQTLATQGTRPQMMGGQMGPGGPMGNQMGGGNASNLLNTLNRPQMPMTGGMANMQGRVGTMGGPNQMGGMMPGQMPQGMPGMPNQMGGAMGPGGMSGGKIVGQMNPMGQMNPMQMGVSGMPQGAGQQQPQQPQGQQGGPGGPNQMNPMGGMGMQVNPGGHMNQNAINQQMNQVGMSSGGNQMGNLGGNSPMNPGNMGIAPNQVIRQQMPPGMNPNQQQLGMAGGQMNQMNQGVGGPGGNLGPVQQQQQPGQVGMAGMGPGGPGNLQQQNNPQQQSQGGPNAAPGQMNQVGGPGGNMQAMGNQGNFVPIGANPMVRKQDMMSGGQVYPGGVVRSVTPNQFLRQSPSPSVPSPAGPGSIGPQSHPGQMIPSPALIPSPSPQVSSNIPAPRNIGQSPGQSLNTPGQAAAPSPLNPQEEHLYKEKYRSLQKYIEPLKRMIAKMEHDDVDKMGKMKRLLDILCNPTCRIPLETLYKCEAALTSQLGTIREPPLNNPLVEAVSANLQSPLGNHTLQRTFRPCLEALFGPDIKNLPTPAKQPRLAIDEPSTSGSTGSQEIPHILQGEIARLDQKFKVSLDPCAIGDTKTIKLICWLDDKHLPCVPPVAVTIPEEYPFTSPSCSLIEQEYNATPFLIQVQKSFLARICKLPEMFSLSHLLDTWEMSVRQACSPNPSLVAPSATSVLLGM.

2 stretches are compositionally biased toward polar residues: residues 70 to 90 and 98 to 108; these read NKNQ…NQQG and ALQTLATQGTR. Disordered stretches follow at residues 70 to 131, 209 to 407, 437 to 512, and 629 to 649; these read NKNQ…GGNA, NPMQ…VPIG, FLRQ…NPQE, and PAKQ…TGSQ. Gly residues predominate over residues 114-130; sequence GQMGPGGPMGNQMGGGN. Low complexity-rich tracts occupy residues 209–232 and 240–270; these read NPMQ…QPQG and PNQM…QMNQ. The segment covering 274–284 has biased composition (gly residues); that stretch reads SSGGNQMGNLG. Composition is skewed to low complexity over residues 285-295, 304-329, and 339-350; these read GNSPMNPGNMG, QQMP…QMNQ, and GPVQQQQQPGQV. Over residues 351-361 the composition is skewed to gly residues; it reads GMAGMGPGGPG. Composition is skewed to low complexity over residues 362-383, 393-402, and 451-468; these read NLQQ…APGQ, NMQAMGNQGN, and GPGS…IPSP. Composition is skewed to polar residues over residues 477 to 500 and 640 to 649; these read QVSS…NTPG and PSTSGSTGSQ.

The protein belongs to the Mediator complex subunit 15 family. In terms of assembly, component of the Mediator complex.

The protein resides in the nucleus. Functionally, component of the Mediator complex, a coactivator involved in the regulated transcription of nearly all RNA polymerase II-dependent genes. Mediator functions as a bridge to convey information from gene-specific regulatory proteins to the basal RNA polymerase II transcription machinery. Mediator is recruited to promoters by direct interactions with regulatory proteins and serves as a scaffold for the assembly of a functional preinitiation complex with RNA polymerase II and the general transcription factors. This chain is Mediator of RNA polymerase II transcription subunit 15 (MED15), found in Aedes aegypti (Yellowfever mosquito).